The sequence spans 474 residues: Glycogen synthase (474 aa).

Lys15 contributes to the ADP-alpha-D-glucose binding site.

It belongs to the glycosyltransferase 1 family. Bacterial/plant glycogen synthase subfamily.

It carries out the reaction [(1-&gt;4)-alpha-D-glucosyl](n) + ADP-alpha-D-glucose = [(1-&gt;4)-alpha-D-glucosyl](n+1) + ADP + H(+). The protein operates within glycan biosynthesis; glycogen biosynthesis. Synthesizes alpha-1,4-glucan chains using ADP-glucose. The chain is Glycogen synthase from Chlamydia trachomatis serovar D (strain ATCC VR-885 / DSM 19411 / UW-3/Cx).